The sequence spans 475 residues: MYEKLQPPSVGSKITFVAGKPVVPNDPIIPYIRGDGTGVDIWPATELVINAAIAKAYGGREEINWFKVYAGDEACELYGTYQIFPEDTLTAIKEYGVAIKGPLTTPVGGGIRSLNVALRQIFDLYTCVRPCRYYPGTPSPHKTPEKLDIIVYRENTEDIYLGIEWAEGTEGAKKLIAYLNDELIPTTPALGKKQIRLDSGIGIKPISKTGSQRLVRRAILHAKRLPKAKQMVTLVHKGNIMKFTEGPFRDWGYELATTEFRAECVTERESWICGNKESNPDLTIEANAHMIDPGYDTLTEEKQAVIKQEVEQVLNSIWESHGNGQWKEKVMVNDRIADSIFQQIQTRPDEYSILATMNLNGDYLSDAAAAVVGGLGMGPGANIGDSAAIFEATHGTAPKHAGLDRINPGSVILSGVMMLEFMGWQEAADLIKKGIGAAIANREVTYDLARLMEPKVDKPLKCSEFAQAIVSHFDD.

Threonine 104 contributes to the NADP(+) binding site. 5 residues coordinate D-threo-isocitrate: serine 113, asparagine 115, arginine 119, arginine 129, and arginine 153. Aspartate 362 serves as a coordination point for Mg(2+). NADP(+) contacts are provided by residues 394–400 (HGTAPKH), asparagine 407, tyrosine 446, and arginine 450.

The protein belongs to the isocitrate and isopropylmalate dehydrogenases family. Homodimer. It depends on Mg(2+) as a cofactor. The cofactor is Mn(2+).

It localises to the cytoplasm. It catalyses the reaction D-threo-isocitrate + NADP(+) = 2-oxoglutarate + CO2 + NADPH. With respect to regulation, inhibited non-competitively by ADP and 2-oxoglutarate, with respect to isocitrate and in a competitive manner by NADPH. Catalyzes the oxidative decarboxylation of isocitrate to 2-oxoglutarate and carbon dioxide with the concomitant reduction of NADP(+). Is specific for NADP(+), cannot use NAD(+). This chain is Isocitrate dehydrogenase [NADP], found in Synechocystis sp. (strain ATCC 27184 / PCC 6803 / Kazusa).